Here is a 130-residue protein sequence, read N- to C-terminus: Abscisic acid and environmental stress-inducible protein TAS14 (130 aa).

The disordered stretch occupies residues 1 to 130; it reads MAQYGNQDQM…KIKDKIPGMH (130 aa). The span at 27–58 shows a compositional bias: gly residues; it reads QGTGTGGMMGGTGTGGMMGGTGGEYGTQGMGT. 2 stretches are compositionally biased toward basic and acidic residues: residues 61-73 and 92-130; these read HHHE…RRSD and KEKI…PGMH.

This sequence belongs to the plant dehydrin family.

This chain is Abscisic acid and environmental stress-inducible protein TAS14 (TAS14), found in Solanum lycopersicum (Tomato).